Reading from the N-terminus, the 792-residue chain is Ubiquitin carboxyl-terminal hydrolase 10 (792 aa).

Residue alanine 2 is modified to N-acetylalanine. Positions 2–99 (ALHNPQYIFG…ILGCTTSKKI (98 aa)) are interaction with p53/TP53. The tract at residues 6 to 21 (PQYIFGDFSPDEFNQF) is G3BP1-binding. Threonine 24 is subject to Phosphothreonine. The disordered stretch occupies residues 126–164 (SNAEAETLENDSGAGGLGQRERKKKKKRPPGYYSYLKDG). Phosphoserine is present on residues serine 208 and serine 223. The segment covering 300–309 (DEGADLDPAK) has biased composition (basic and acidic residues). Residues 300–323 (DEGADLDPAKPESQSPPAESALSA) form a disordered region. Serine 314 bears the Phosphoserine mark. Residue serine 330 is modified to Phosphoserine; by ATM. Positions 350 to 369 (PMAYVETKCSPPVPSPLASE) are disordered. Residues serine 359 and serine 364 each carry the phosphoserine modification. Residues 409-789 (RGLINKGNWC…TAYLLYYRRV (381 aa)) enclose the USP domain. The Nucleophile role is filled by cysteine 418. At serine 541 the chain carries Phosphoserine. The segment at 542-580 (PTHEKHSVSNGPRSDLIEDEELEDTGKGSEDEWEQVGPK) is disordered. Residue threonine 566 is modified to Phosphothreonine. Serine 570 carries the phosphoserine modification. The active-site Proton acceptor is the histidine 743.

The protein belongs to the peptidase C19 family. USP10 subfamily. Found in a deubiquitination complex with TANK, USP10 and ZC3H12A; this complex inhibits genotoxic stress- or interleukin-1-beta (IL1B)-mediated NF-kappa-B activation by promoting IKBKG or TRAF6 deubiquitination. Interacts with IKBKG; this interaction increases in response to DNA damage. Interacts with TANK; this interaction increases in response to DNA damage. Interacts with TRAF6; this interaction increases in response to DNA damage. Interacts with ZC3H12A; this interaction increases in response to DNA damage. Interacts with G3BP1 (via NTF2 domain) and G3BP2 (via NTF2 domain); inhibiting stress granule formation. Post-translationally, phosphorylated by ATM following DNA damage, leading to stabilization and translocation it to the nucleus. Ubiquitinated. Deubiquitinated by USP13.

It is found in the cytoplasm. The protein localises to the nucleus. Its subcellular location is the early endosome. The enzyme catalyses Thiol-dependent hydrolysis of ester, thioester, amide, peptide and isopeptide bonds formed by the C-terminal Gly of ubiquitin (a 76-residue protein attached to proteins as an intracellular targeting signal).. Specifically inhibited by spautin-1 (specific and potent autophagy inhibitor-1), a derivative of MBCQ that binds to USP10 and inhibits deubiquitinase activity. Regulated by PIK3C3/VPS34-containing complexes. In terms of biological role, hydrolase that can remove conjugated ubiquitin from target proteins such as p53/TP53, RPS2/us5, RPS3/us3, RPS10/eS10, BECN1, SNX3 and CFTR. Acts as an essential regulator of p53/TP53 stability: in unstressed cells, specifically deubiquitinates p53/TP53 in the cytoplasm, leading to counteract MDM2 action and stabilize p53/TP53. Following DNA damage, translocates to the nucleus and deubiquitinates p53/TP53, leading to regulate the p53/TP53-dependent DNA damage response. Component of a regulatory loop that controls autophagy and p53/TP53 levels: mediates deubiquitination of BECN1, a key regulator of autophagy, leading to stabilize the PIK3C3/VPS34-containing complexes. In turn, PIK3C3/VPS34-containing complexes regulate USP10 stability, suggesting the existence of a regulatory system by which PIK3C3/VPS34-containing complexes regulate p53/TP53 protein levels via USP10 and USP13. Does not deubiquitinate MDM2. Plays a key role in 40S ribosome subunit recycling when a ribosome has stalled during translation: acts both by inhibiting formation of stress granules, which store stalled translation pre-initiation complexes, and mediating deubiquitination of 40S ribosome subunits. Acts as a negative regulator of stress granules formation by lowering G3BP1 and G3BP2 valence, thereby preventing G3BP1 and G3BP2 ability to undergo liquid-liquid phase separation (LLPS) and assembly of stress granules. Promotes 40S ribosome subunit recycling following ribosome dissociation in response to ribosome stalling by mediating deubiquitination of 40S ribosomal proteins RPS2/us5, RPS3/us3 and RPS10/eS10, thereby preventing their degradation by the proteasome. Part of a ribosome quality control that takes place when ribosomes have stalled during translation initiation (iRQC): USP10 acts by removing monoubiquitination of RPS2/us5 and RPS3/us3, promoting 40S ribosomal subunit recycling. Deubiquitinates CFTR in early endosomes, enhancing its endocytic recycling. Involved in a TANK-dependent negative feedback response to attenuate NF-kappa-B activation via deubiquitinating IKBKG or TRAF6 in response to interleukin-1-beta (IL1B) stimulation or upon DNA damage. Deubiquitinates TBX21 leading to its stabilization. Plays a negative role in the RLR signaling pathway upon RNA virus infection by blocking the RIGI-mediated MAVS activation. Mechanistically, removes the unanchored 'Lys-63'-linked polyubiquitin chains of MAVS to inhibit its aggregation, essential for its activation. The chain is Ubiquitin carboxyl-terminal hydrolase 10 (Usp10) from Mus musculus (Mouse).